A 49-amino-acid chain; its full sequence is Large ribosomal subunit protein bL33 (49 aa).

The protein belongs to the bacterial ribosomal protein bL33 family.

In Desulfitobacterium hafniense (strain Y51), this protein is Large ribosomal subunit protein bL33.